Consider the following 79-residue polypeptide: MTKEQILVDVQEAIAEKLGKEQSEITLDKSFKDDLGADSLEVMELVMDLEDKFEITIEDDQAENLKTVGDVVSYIETQV.

The region spanning 1-79 is the Carrier domain; it reads MTKEQILVDV…DVVSYIETQV (79 aa). S39 is modified (O-(pantetheine 4'-phosphoryl)serine).

The protein belongs to the acyl carrier protein (ACP) family. 4'-phosphopantetheine is transferred from CoA to a specific serine of apo-ACP by AcpS. This modification is essential for activity because fatty acids are bound in thioester linkage to the sulfhydryl of the prosthetic group.

Its subcellular location is the cytoplasm. It functions in the pathway lipid metabolism; fatty acid biosynthesis. Carrier of the growing fatty acid chain in fatty acid biosynthesis. In Exiguobacterium sibiricum (strain DSM 17290 / CCUG 55495 / CIP 109462 / JCM 13490 / 255-15), this protein is Acyl carrier protein.